The chain runs to 71 residues: Phosphatidylinositol N-acetylglucosaminyltransferase subunit Y (71 aa).

Over 1-5 (MIRSL) the chain is Cytoplasmic. A helical transmembrane segment spans residues 6-26 (PTMTVLIPLVSLAGLLYSASV). At 27-44 (EEGFPEGCTSASSLCFYS) the chain is on the lumenal side. Residues 45 to 65 (LLLPVTVPVYVFFHLWTWMGL) traverse the membrane as a helical segment. Topologically, residues 66-71 (KLFRHN) are cytoplasmic.

In terms of assembly, component of the glycosylphosphatidylinositol-N-acetylglucosaminyltransferase (GPI-GnT) complex composed at least by PIGA, PIGC, PIGH, PIGP, PIGQ, PIGY and DPM2. Interacts directly with PIGA; this interaction regulates glycosylphosphatidylinositol-N-acetylglucosaminyltransferase activity. Does not interact with Ras proteins.

Its subcellular location is the endoplasmic reticulum membrane. It participates in glycolipid biosynthesis; glycosylphosphatidylinositol-anchor biosynthesis. Part of the glycosylphosphatidylinositol-N-acetylglucosaminyltransferase (GPI-GnT) complex that catalyzes the transfer of N-acetylglucosamine from UDP-N-acetylglucosamine to phosphatidylinositol and participates in the first step of GPI biosynthesis. May act by regulating the catalytic subunit PIGA. The chain is Phosphatidylinositol N-acetylglucosaminyltransferase subunit Y from Mus musculus (Mouse).